Reading from the N-terminus, the 316-residue chain is Olfactory receptor 6B9 (316 aa).

Residues 1–22 (MENITNISEFILMGFPTAPWLQ) are Extracellular-facing. N-linked (GlcNAc...) asparagine glycosylation is found at asparagine 3 and asparagine 6. A helical membrane pass occupies residues 23–43 (ILLFSIFFITYVFVLLENLVI). At 44–64 (ILTVWVTGSLHKPMYYFLSTM) the chain is on the cytoplasmic side. The helical transmembrane segment at 65–85 (SFLEAWYISVTVPKMLAGFLF) threads the bilayer. Residues 86 to 97 (RPNTISFLGCMT) are Extracellular-facing. Cysteine 95 and cysteine 187 are disulfide-bonded. Residues 98 to 118 (QLYFFMSLACTECVLLAAMAY) traverse the membrane as a helical segment. At 119-132 (DRYVAICWPLRYPV) the chain is on the cytoplasmic side. A helical membrane pass occupies residues 133–153 (MMTTGFCVQLTISSWVSGFTI). The Extracellular segment spans residues 154–199 (SMAKVYFISRVAFCGNNVLNHFFCDVSPILKLACMNLSMAETVDFA). Residues 200-220 (LAIVILIFPLSATVLSYGFIV) traverse the membrane as a helical segment. Topologically, residues 221–237 (STVLQIPSATGQRKAFS) are cytoplasmic. Residues 238 to 258 (TCASHLTVVVIFYTAVIFMYV) form a helical membrane-spanning segment. Residues 259–269 (RPRAIASFNSN) lie on the Extracellular side of the membrane. A helical transmembrane segment spans residues 270 to 290 (KLISAIYAVFTPMLNPIIYCL). Over 291 to 316 (RNKEVKDAIRKTIAGGRAPALGESIS) the chain is Cytoplasmic.

Belongs to the G-protein coupled receptor 1 family. As to expression, olfactory epithelium.

Its subcellular location is the cell membrane. Odorant receptor. The protein is Olfactory receptor 6B9 of Mus musculus (Mouse).